Consider the following 632-residue polypeptide: Cell pattern formation-associated protein stuA (632 aa).

Residues 1-20 (MNQTQSYMDVHTSHFSSPQP) are compositionally biased toward polar residues. A disordered region spans residues 1–27 (MNQTQSYMDVHTSHFSSPQPYGSHGAT). The HTH APSES-type domain occupies 128-234 (RVTATLWEDE…HNIGGLLYHP (107 aa)). The segment at residues 162 to 183 (GTKLLNVAGMTRGRRDGILKSE) is a DNA-binding region (H-T-H motif). 4 disordered regions span residues 246-315 (DSQQ…ASSL), 340-386 (QNVP…KSYY), 403-460 (AHSL…QQEP), and 473-632 (NRNS…MRRR). Polar residues-rich tracts occupy residues 254 to 264 (GSQTARTSQGP), 275 to 295 (MNGS…QTNG), 340 to 354 (QNVP…TRSM), and 364 to 376 (GNNL…YQNQ). Residues 377–386 (PAYDSSKSYY) are compositionally biased toward low complexity. Over residues 428–438 (EQEHDEVKVDR) the composition is skewed to basic and acidic residues. The span at 473–506 (NRNSYTYTTNPSVSSLSGDHSQLGGSPSHQNGSD) shows a compositional bias: polar residues. A compositionally biased stretch (low complexity) spans 558–576 (AYASNYSGYSSVNGSSMGS). Positions 578–604 (KRMRDDDDDHLSRSDGRENEYETKRRK) are nuclear localization domain. A compositionally biased stretch (basic and acidic residues) spans 579–600 (RMRDDDDDHLSRSDGRENEYET).

The protein belongs to the EFG1/PHD1/stuA family.

The protein localises to the nucleus. Functionally, transcription factor that regulates asexual reproduction. Binds the StuA-response elements (StRE) with the consensus sequence 5'-(A/T)CGCG(T/A)N(A/C)-3' at the promoters of target genes. Required for accurate spatial organization of the developing conidiophore. Primarily involved in the formation of the uninucleate sterigmata, which arise by budding in this multicellular structure. Required for metula and phialide formation during conidiation but is not required for dimorphic growth. In Talaromyces marneffei (Penicillium marneffei), this protein is Cell pattern formation-associated protein stuA.